A 229-amino-acid chain; its full sequence is Potassium/proton antiporter CemA (229 aa).

The next 3 membrane-spanning stretches (helical) occupy residues 6–26 (AFIP…ISLC), 107–127 (ILHF…SFWG), and 189–209 (ILSG…KYWI).

This sequence belongs to the CemA family.

It localises to the plastid. Its subcellular location is the chloroplast inner membrane. It carries out the reaction K(+)(in) + H(+)(out) = K(+)(out) + H(+)(in). Functionally, contributes to K(+)/H(+) antiport activity by supporting proton efflux to control proton extrusion and homeostasis in chloroplasts in a light-dependent manner to modulate photosynthesis. Prevents excessive induction of non-photochemical quenching (NPQ) under continuous-light conditions. Indirectly promotes efficient inorganic carbon uptake into chloroplasts. This Nasturtium officinale (Watercress) protein is Potassium/proton antiporter CemA.